The chain runs to 140 residues: RxLR effector protein CRE2 (140 aa).

An N-terminal signal peptide occupies residues 1-24; that stretch reads MRWLIWTAVSTLVMLLAMTEVSAS. The RxLR-dEER motif lies at 56–72; the sequence is RSLRDKSSSLITESEER.

It belongs to the RxLR effector family.

Its subcellular location is the secreted. The protein resides in the host cell. In terms of biological role, effector that is involved in host plant infection. Contributes to virulence during the early infection stage, by inhibiting plant defense responses induced by both PAMP-triggered immunity (PTI) and effector-triggered immunity (ETI). The chain is RxLR effector protein CRE2 from Phytophthora infestans (strain T30-4) (Potato late blight agent).